The primary structure comprises 195 residues: Probable nicotinate-nucleotide adenylyltransferase (195 aa).

Belongs to the NadD family.

The catalysed reaction is nicotinate beta-D-ribonucleotide + ATP + H(+) = deamido-NAD(+) + diphosphate. The protein operates within cofactor biosynthesis; NAD(+) biosynthesis; deamido-NAD(+) from nicotinate D-ribonucleotide: step 1/1. Its function is as follows. Catalyzes the reversible adenylation of nicotinate mononucleotide (NaMN) to nicotinic acid adenine dinucleotide (NaAD). This is Probable nicotinate-nucleotide adenylyltransferase from Chlorobaculum tepidum (strain ATCC 49652 / DSM 12025 / NBRC 103806 / TLS) (Chlorobium tepidum).